The sequence spans 94 residues: Phosphoribosyl-ATP pyrophosphatase (94 aa).

Belongs to the PRA-PH family.

It localises to the cytoplasm. The enzyme catalyses 1-(5-phospho-beta-D-ribosyl)-ATP + H2O = 1-(5-phospho-beta-D-ribosyl)-5'-AMP + diphosphate + H(+). The protein operates within amino-acid biosynthesis; L-histidine biosynthesis; L-histidine from 5-phospho-alpha-D-ribose 1-diphosphate: step 2/9. The chain is Phosphoribosyl-ATP pyrophosphatase from Pyrobaculum arsenaticum (strain DSM 13514 / JCM 11321 / PZ6).